A 332-amino-acid polypeptide reads, in one-letter code: 2-hydroxyacid dehydrogenase homolog 1 (332 aa).

Residues 154–155, 233–235, and D259 each bind NAD(+); these read RI and TSR. The active site involves R235. E264 is an active-site residue. H296 acts as the Proton donor in catalysis. 296-299 is an NAD(+) binding site; the sequence is HQAF.

The protein belongs to the D-isomer specific 2-hydroxyacid dehydrogenase family.

It is found in the cytoplasm. The protein localises to the nucleus. This chain is 2-hydroxyacid dehydrogenase homolog 1, found in Schizosaccharomyces pombe (strain 972 / ATCC 24843) (Fission yeast).